The primary structure comprises 214 residues: Phosphatidylserine decarboxylase proenzyme (214 aa).

Catalysis depends on S183, which acts as the Schiff-base intermediate with substrate; via pyruvic acid. A Pyruvic acid (Ser); by autocatalysis modification is found at S183.

It belongs to the phosphatidylserine decarboxylase family. PSD-A subfamily. As to quaternary structure, heterodimer of a large membrane-associated beta subunit and a small pyruvoyl-containing alpha subunit. Pyruvate is required as a cofactor. In terms of processing, is synthesized initially as an inactive proenzyme. Formation of the active enzyme involves a self-maturation process in which the active site pyruvoyl group is generated from an internal serine residue via an autocatalytic post-translational modification. Two non-identical subunits are generated from the proenzyme in this reaction, and the pyruvate is formed at the N-terminus of the alpha chain, which is derived from the carboxyl end of the proenzyme. The post-translation cleavage follows an unusual pathway, termed non-hydrolytic serinolysis, in which the side chain hydroxyl group of the serine supplies its oxygen atom to form the C-terminus of the beta chain, while the remainder of the serine residue undergoes an oxidative deamination to produce ammonia and the pyruvoyl prosthetic group on the alpha chain.

Its subcellular location is the cell membrane. It catalyses the reaction a 1,2-diacyl-sn-glycero-3-phospho-L-serine + H(+) = a 1,2-diacyl-sn-glycero-3-phosphoethanolamine + CO2. It functions in the pathway phospholipid metabolism; phosphatidylethanolamine biosynthesis; phosphatidylethanolamine from CDP-diacylglycerol: step 2/2. In terms of biological role, catalyzes the formation of phosphatidylethanolamine (PtdEtn) from phosphatidylserine (PtdSer). The protein is Phosphatidylserine decarboxylase proenzyme of Chlorobaculum parvum (strain DSM 263 / NCIMB 8327) (Chlorobium vibrioforme subsp. thiosulfatophilum).